Here is a 153-residue protein sequence, read N- to C-terminus: Transcriptional repressor NrdR (153 aa).

The tract at residues 1–22 is disordered; that stretch reads MRCPACHHNGTRVLDSRPAHEG. Residues 3–34 fold into a zinc finger; sequence CPACHHNGTRVLDSRPAHEGRSIRRRRECESC. Residues 49–139 form the ATP-cone domain; that stretch reads LIVVKKDGTR…VYRQFKDINV (91 aa).

The protein belongs to the NrdR family. It depends on Zn(2+) as a cofactor.

Negatively regulates transcription of bacterial ribonucleotide reductase nrd genes and operons by binding to NrdR-boxes. The polypeptide is Transcriptional repressor NrdR (Halalkalibacterium halodurans (strain ATCC BAA-125 / DSM 18197 / FERM 7344 / JCM 9153 / C-125) (Bacillus halodurans)).